A 429-amino-acid chain; its full sequence is tRNA-2-methylthio-N(6)-dimethylallyladenosine synthase (429 aa).

The MTTase N-terminal domain maps to 1–110; that stretch reads MKFFIKTYGC…IPEAVELSIK (110 aa). Positions 10, 46, 75, 146, 150, and 153 each coordinate [4Fe-4S] cluster. A Radical SAM core domain is found at 132–364; that stretch reads RNSKHHAWIT…NLQKEINKML (233 aa). The 62-residue stretch at 366–427 folds into the TRAM domain; sequence ESYLDKTVEV…AGPLYGDIIK (62 aa).

This sequence belongs to the methylthiotransferase family. MiaB subfamily. As to quaternary structure, monomer. Requires [4Fe-4S] cluster as cofactor.

The protein localises to the cytoplasm. It catalyses the reaction N(6)-dimethylallyladenosine(37) in tRNA + (sulfur carrier)-SH + AH2 + 2 S-adenosyl-L-methionine = 2-methylsulfanyl-N(6)-dimethylallyladenosine(37) in tRNA + (sulfur carrier)-H + 5'-deoxyadenosine + L-methionine + A + S-adenosyl-L-homocysteine + 2 H(+). Functionally, catalyzes the methylthiolation of N6-(dimethylallyl)adenosine (i(6)A), leading to the formation of 2-methylthio-N6-(dimethylallyl)adenosine (ms(2)i(6)A) at position 37 in tRNAs that read codons beginning with uridine. In Thermosipho africanus (strain TCF52B), this protein is tRNA-2-methylthio-N(6)-dimethylallyladenosine synthase.